The primary structure comprises 414 residues: Zinc metalloproteinase nas-26 (414 aa).

The first 20 residues, 1–20 (MTSSLVLILAPLALVAIGEA), serve as a signal peptide directing secretion. Positions 21–61 (AFGNSSKIFEIPGLEVMASDKYPHFTTIETVSRTKVHRHRR) are excised as a propeptide. An N-linked (GlcNAc...) asparagine glycan is attached at Asn-24. One can recognise a Peptidase M12A domain in the interval 62-264 (EVIAGQIYDW…AKVINDIYCP (203 aa)). Cystine bridges form between Cys-103/Cys-263, Cys-126/Cys-146, Cys-267/Cys-286, Cys-289/Cys-300, Cys-308/Cys-331, and Cys-358/Cys-378. His-154 serves as a coordination point for Zn(2+). Glu-155 is a catalytic residue. Zn(2+) is bound by residues His-158 and His-164. The EGF-like domain occupies 251–307 (AFLDAKVINDIYCPNACQGRNHLNCLAGGYPDPNNCNVCRCPEGLGGPDCGRLQPSP). The 107-residue stretch at 308–414 (CGGEIHASDQ…RFSLRFRRQA (107 aa)) folds into the CUB domain.

Zn(2+) is required as a cofactor.

The protein resides in the secreted. Metalloprotease. The chain is Zinc metalloproteinase nas-26 (toh-1) from Caenorhabditis elegans.